A 233-amino-acid polypeptide reads, in one-letter code: Transcriptional regulatory protein PrrA (233 aa).

Residues 9 to 123 (RVLVVDDDSD…ELVARVKALL (115 aa)) form the Response regulatory domain. Position 58 is a 4-aspartylphosphate (D58). Residues 134 to 232 (SETIAVGPLE…VRGVGFVLRM (99 aa)) constitute a DNA-binding region (ompR/PhoB-type).

In terms of processing, phosphorylated by PrrB at Asp-58.

The protein resides in the cytoplasm. Functionally, member of the two-component regulatory system PrrB/PrrA that is involved specifically in early intracellular multiplication of Mycobacterium and is essential for its viability. Upon phosphorylation by PrrB, functions as a transcription regulator by direct binding to promoter regions of target genes to positively regulate their expression. Autoregulates its own expression. The sequence is that of Transcriptional regulatory protein PrrA (prrA) from Mycobacterium leprae (strain TN).